Reading from the N-terminus, the 124-residue chain is Small ribosomal subunit protein uS13 (124 aa).

A disordered region spans residues 98 to 124; that stretch reads VRGQRTRCNARTRKGPRKTVGAKRKEK.

Belongs to the universal ribosomal protein uS13 family. In terms of assembly, part of the 30S ribosomal subunit. Forms a loose heterodimer with protein S19. Forms two bridges to the 50S subunit in the 70S ribosome.

In terms of biological role, located at the top of the head of the 30S subunit, it contacts several helices of the 16S rRNA. In the 70S ribosome it contacts the 23S rRNA (bridge B1a) and protein L5 of the 50S subunit (bridge B1b), connecting the 2 subunits; these bridges are implicated in subunit movement. Contacts the tRNAs in the A and P-sites. This Dictyoglomus thermophilum (strain ATCC 35947 / DSM 3960 / H-6-12) protein is Small ribosomal subunit protein uS13.